We begin with the raw amino-acid sequence, 189 residues long: Ras-like protein 1 (189 aa).

Gly10 to Ser17 provides a ligand contact to GTP. Positions Tyr32 to Tyr40 match the Effector region motif. Residues Asp57–Gln61 and Asn116–Asp119 contribute to the GTP site. A Cysteine methyl ester modification is found at Cys186. The S-geranylgeranyl cysteine moiety is linked to residue Cys186. A propeptide spans Lys187 to Leu189 (removed in mature form).

The protein belongs to the small GTPase superfamily. Ras family.

It is found in the cell membrane. It catalyses the reaction GTP + H2O = GDP + phosphate + H(+). Its activity is regulated as follows. Alternates between an inactive form bound to GDP and an active form bound to GTP. Activated by a guanine nucleotide-exchange factor (GEF) and inactivated by a GTPase-activating protein (GAP). Functionally, ras proteins bind GDP/GTP and possess intrinsic GTPase activity. Plays a role in eye development by regulating cell growth, survival of postmitotic ommatidial cells and differentiation of photoreceptor cells. During larval development, mediates Ptth/tor signaling leading to the production of ecdysone, a hormone required for the initiation of metamorphosis. The polypeptide is Ras-like protein 1 (Drosophila ananassae (Fruit fly)).